Here is a 458-residue protein sequence, read N- to C-terminus: Protein adenylyltransferase FICD (458 aa).

At 1-23 the chain is on the cytoplasmic side; the sequence is MILMPMASVVAVAEPKWVSVWGR. The helical; Signal-anchor for type II membrane protein transmembrane segment at 24–44 threads the bilayer; sequence FLWMTLLSMALGSLLALLLPL. Residues 45 to 458 are Lumenal-facing; it reads GAVEEQCLAV…GFKETLPVRP (414 aa). The residue at position 79 (Ser-79) is an O-AMP-serine; by autocatalysis. An O-AMP-threonine; by autocatalysis modification is found at Thr-80. TPR repeat units follow at residues 106 to 139 and 140 to 173; these read AKAA…DPGF and VDAL…SPFH. Position 183 is an O-AMP-threonine; by autocatalysis (Thr-183). Residues 230–235 carry the Inhibitory (S/T)XXXE(G/N) motif motif; that stretch reads TVAIEG. Glu-234 serves as a coordination point for ATP. An N-linked (GlcNAc...) asparagine glycan is attached at Asn-275. Positions 285–420 constitute a Fido domain; sequence VTIDHMLEIH…VRPFIRFIAK (136 aa). 316-319 is an ATP binding site; the sequence is VGHH. His-363 is an active-site residue. ATP is bound by residues 367 to 374, 399 to 400, and Asn-407; these read DGNGRTSR and YY.

The protein belongs to the fic family. Homodimer. Interacts with HD. It depends on Mg(2+) as a cofactor. Mn(2+) is required as a cofactor. Post-translationally, auto-AMPylated in vitro.

It is found in the endoplasmic reticulum membrane. The enzyme catalyses L-tyrosyl-[protein] + ATP = O-(5'-adenylyl)-L-tyrosyl-[protein] + diphosphate. It carries out the reaction 3-O-(5'-adenylyl)-L-threonyl-[protein] + H2O = L-threonyl-[protein] + AMP + H(+). It catalyses the reaction L-threonyl-[protein] + ATP = 3-O-(5'-adenylyl)-L-threonyl-[protein] + diphosphate. With respect to regulation, the side chain of Glu-234 determines which of the two opposing activities (AMPylase or de-AMPylase) will take place. In response to endoplasmic reticulum stress, mediates de-AMPylase activity. Adenylyltransferase activity is inhibited by the inhibitory helix present at the N-terminus: Glu-234 binds ATP and competes with ATP-binding at Arg-374, thereby preventing adenylyltransferase activity. In unstressed cells, disengagement of Glu-234 promotes adenylyltransferase activity. Activation dissociates ATP-binding from Glu-234, allowing ordered binding of the entire ATP moiety with the alpha-phosphate in an orientation that is productive for accepting an incoming target hydroxyl side chain. Functionally, protein that can both mediate the addition of adenosine 5'-monophosphate (AMP) to specific residues of target proteins (AMPylation), and the removal of the same modification from target proteins (de-AMPylation), depending on the context. The side chain of Glu-231 determines which of the two opposing activities (AMPylase or de-AMPylase) will take place. Acts as a key regulator of the ERN1/IRE1-mediated unfolded protein response (UPR) by mediating AMPylation or de-AMPylation of HSPA5/BiP. In unstressed cells, acts as an adenylyltransferase by mediating AMPylation of HSPA5/BiP at 'Thr-518', thereby inactivating it. In response to endoplasmic reticulum stress, acts as a phosphodiesterase by mediating removal of ATP (de-AMPylation) from HSPA5/BiP at 'Thr-518', leading to restore HSPA5/BiP activity. Although it is able to AMPylate RhoA, Rac and Cdc42 Rho GTPases in vitro, Rho GTPases do not constitute physiological substrates. This Rattus norvegicus (Rat) protein is Protein adenylyltransferase FICD.